The sequence spans 80 residues: MSQEAILEKVRSIVAEQLSVDAGEVKPESNFQNDLGADSLDTVELVMALEEAFDIEIPDEAAEGITTVGDAVKYIEDKQA.

The Carrier domain maps to 4 to 79 (EAILEKVRSI…DAVKYIEDKQ (76 aa)). An O-(pantetheine 4'-phosphoryl)serine modification is found at S39.

It belongs to the acyl carrier protein (ACP) family. In terms of processing, 4'-phosphopantetheine is transferred from CoA to a specific serine of apo-ACP by AcpS. This modification is essential for activity because fatty acids are bound in thioester linkage to the sulfhydryl of the prosthetic group.

The protein localises to the cytoplasm. The protein operates within lipid metabolism; fatty acid biosynthesis. Its function is as follows. Carrier of the growing fatty acid chain in fatty acid biosynthesis. The protein is Acyl carrier protein of Parasynechococcus marenigrum (strain WH8102).